A 138-amino-acid chain; its full sequence is UPF0201 protein PH1010 (138 aa).

The protein belongs to the UPF0201 family.

The protein is UPF0201 protein PH1010 of Pyrococcus horikoshii (strain ATCC 700860 / DSM 12428 / JCM 9974 / NBRC 100139 / OT-3).